We begin with the raw amino-acid sequence, 438 residues long: MIPVRVRVFKGTNDKWEDMCIGMVFRIRRGSIFIEDDVSGRPFEISFEEKQCGKSKENVVIVYNDLEEHAICFEAEEIRDEFLEFVEKDLWSQSDLDVREECTASGRETNLFASLFRISRYMDASIFGRMLESRDGVLQLLRMENFHLFRMLLENGERVFRLFGVASKNKITPHGFYAEVIARNLDGPAVRTYEDFLIAMGKQELARSESKVAGMSNEEIRDFLRKCGSSSYKVGRVEMYLERIYKDDVYFFEMFYYLCLIFKERMSEAVDIGYIVCRIRGLTNEKYFSDDFLYALEGLYILLDVCKPEQLDVFYMEISSLFDNLEWYPDLQNFLVYLFGNHGFRTREFLINTGLMKRIFLSGCGGGMGEVFLSKMLLQVVSCGSRFMHRYFIKNDLFRNIAEMYRERRKDAVYSIFLQACSHADSDMKTYLDRHLQN.

This is an uncharacterized protein from Encephalitozoon cuniculi (strain GB-M1) (Microsporidian parasite).